A 130-amino-acid chain; its full sequence is Protein NrdI (130 aa).

It belongs to the NrdI family.

Probably involved in ribonucleotide reductase function. This Bartonella bacilliformis (strain ATCC 35685 / KC583 / Herrer 020/F12,63) protein is Protein NrdI.